A 119-amino-acid polypeptide reads, in one-letter code: Protein phosphatase EYA1 (119 aa).

Belongs to the HAD-like hydrolase superfamily. EYA family. Mg(2+) serves as cofactor.

It localises to the cytoplasm. The protein localises to the nucleus. It carries out the reaction O-phospho-L-tyrosyl-[protein] + H2O = L-tyrosyl-[protein] + phosphate. It catalyses the reaction O-phospho-L-seryl-[protein] + H2O = L-seryl-[protein] + phosphate. The catalysed reaction is O-phospho-L-threonyl-[protein] + H2O = L-threonyl-[protein] + phosphate. Functionally, functions both as protein phosphatase and as transcriptional coactivator for SIX1, and probably also for other transcription factors of this family. Tyrosine phosphatase that dephosphorylates 'Tyr-142' of histone H2AX (H2AXY142ph) and promotes efficient DNA repair via the recruitment of DNA repair complexes containing MDC1. 'Tyr-142' phosphorylation of histone H2AX plays a central role in DNA repair and acts as a mark that distinguishes between apoptotic and repair responses to genotoxic stress. Its function as histone phosphatase may contribute to its function in transcription regulation during organogenesis. Also has phosphatase activity with proteins phosphorylated on Ser and Thr residues (in vitro). Required for normal embryonic development of the skeleton, kidneys and ears. In Gallus gallus (Chicken), this protein is Protein phosphatase EYA1 (EYA1).